The following is a 40-amino-acid chain: Photosystem II reaction center protein J (40 aa).

A helical membrane pass occupies residues 8-28 (IPLWIIGTVTGLLVIGLIGIF).

This sequence belongs to the PsbJ family. In terms of assembly, PSII is composed of 1 copy each of membrane proteins PsbA, PsbB, PsbC, PsbD, PsbE, PsbF, PsbH, PsbI, PsbJ, PsbK, PsbL, PsbM, PsbT, PsbX, PsbY, PsbZ, Psb30/Ycf12, at least 3 peripheral proteins of the oxygen-evolving complex and a large number of cofactors. It forms dimeric complexes.

The protein localises to the plastid. It localises to the chloroplast thylakoid membrane. Functionally, one of the components of the core complex of photosystem II (PSII). PSII is a light-driven water:plastoquinone oxidoreductase that uses light energy to abstract electrons from H(2)O, generating O(2) and a proton gradient subsequently used for ATP formation. It consists of a core antenna complex that captures photons, and an electron transfer chain that converts photonic excitation into a charge separation. The chain is Photosystem II reaction center protein J from Ipomoea purpurea (Common morning glory).